Consider the following 145-residue polypeptide: Flagellar assembly factor FliW (145 aa).

The protein belongs to the FliW family. Interacts with translational regulator CsrA and flagellin(s).

The protein resides in the cytoplasm. In terms of biological role, acts as an anti-CsrA protein, binds CsrA and prevents it from repressing translation of its target genes, one of which is flagellin. Binds to flagellin and participates in the assembly of the flagellum. The polypeptide is Flagellar assembly factor FliW (Exiguobacterium sp. (strain ATCC BAA-1283 / AT1b)).